A 90-amino-acid chain; its full sequence is Putative septation protein SpoVG (90 aa).

This sequence belongs to the SpoVG family.

Could be involved in septation. In Clostridium perfringens (strain SM101 / Type A), this protein is Putative septation protein SpoVG.